A 390-amino-acid chain; its full sequence is Homeobox protein Meis1 (390 aa).

One can recognise an MEIS N-terminal domain in the interval 108 to 191 (GGDVCSSESF…PIDLVIDDRD (84 aa)). Residues 188 to 202 (DDRDGGSKSDSEDLT) are compositionally biased toward basic and acidic residues. The segment at 188–279 (DDRDGGSKSD…KKRNKGRGIF (92 aa)) is disordered. Positions 272–334 (RNKGRGIFPK…NARRRIVQPM (63 aa)) form a DNA-binding region, homeobox; TALE-type. An interaction with DNA region spans residues 299-329 (YPSEEQKKQLAQDTGLTILQVNNWFINARRR).

This sequence belongs to the TALE/MEIS homeobox family. As to quaternary structure, interacts with pbx1 isoform b. As to expression, in the embryo, displays a broad expression pattern with high levels observed in tissues of neural cell fate such as midbrain, hindbrain, dorsal portion of the neural tube, and neural crest-derived branchial arches. Widely expressed in the adult with highest levels in brain and spleen.

It localises to the cytoplasm. Its subcellular location is the nucleus. Its function is as follows. Induces expression of a number of neural crest marker genes as part of a heterodimer with isoform b of pbx1, to specify neural crest cell fate. Binds to a highly conserved region in the promoter of the neural crest marker gene zic3. This is Homeobox protein Meis1 (meis1) from Xenopus laevis (African clawed frog).